A 1477-amino-acid polypeptide reads, in one-letter code: Oligomycin resistance ATP-dependent permease YOR1 (1477 aa).

Residues 1–48 are disordered; the sequence is MTITVGDAVSETELENKSQNVVLSPKASASSDISTDVDKDTSSSWDDK. Topologically, residues 1 to 206 are cytoplasmic; that stretch reads MTITVGDAVS…RALLFTFKKQ (206 aa). Ser-10 and Ser-24 each carry phosphoserine. A compositionally biased stretch (basic and acidic residues) spans 36–48; it reads DVDKDTSSSWDDK. Thr-53 carries the phosphothreonine modification. A Diacidic ER export motif DxE motif is present at residues 71 to 73; the sequence is DIE. A helical membrane pass occupies residues 207 to 227; sequence YFMSIVFAILANCTSGFNPMI. The ABC transmembrane type-1 1 domain maps to 207–493; sequence YFMSIVFAIL…LPIAIGTGID (287 aa). Topologically, residues 228 to 249 are extracellular; sequence TKRLIEFVEEKAIFHSMHVNKG. A helical transmembrane segment spans residues 250–270; sequence IGYAIGACLMMFVNGLTFNHF. The Cytoplasmic portion of the chain corresponds to 271–328; that stretch reads FHTSQLTGVQAKSILTKAAMKKMFNASNYARHCFPNGKVTSFVTTDLARIEFALSFQP. The helical transmembrane segment at 329-349 threads the bilayer; sequence FLAGFPAILAICIVLLIVNLG. The Extracellular segment spans residues 350–357; the sequence is PIALVGIG. The chain crosses the membrane as a helical span at residues 358 to 370; that stretch reads IFFGGFFISLFAF. Topologically, residues 371-433 are cytoplasmic; the sequence is KLILGFRIAA…KVRKMQLSRN (63 aa). A helical transmembrane segment spans residues 434–454; that stretch reads FLIAMAMSLPSIASLVTFLAM. Residues 455–478 are Extracellular-facing; that stretch reads YKVNKGGRQPGNIFASLSLFQVLS. A helical transmembrane segment spans residues 479 to 499; sequence LQMFFLPIAIGTGIDMIIGLG. Over 500 to 615 the chain is Cytoplasmic; the sequence is RLQSLLEAPE…DLNFDIKKGE (116 aa). The tract at residues 552-595 is disordered; the sequence is KGEAKDEGKKNKKKRKDTWGKPSASTNKAKRLDNMLKDRDGPED. The span at 581–595 shows a compositional bias: basic and acidic residues; it reads KRLDNMLKDRDGPED. Residues 581–808 enclose the ABC transporter 1 domain; it reads KRLDNMLKDR…NQTLINLLQF (228 aa). Residues 616–636 form a helical membrane-spanning segment; it reads FIMITGPIGTGKSSLLNAMAG. Position 621–628 (621–628) interacts with ATP; that stretch reads GPIGTGKS. At 637-892 the chain is on the extracellular side; it reads SMRKTDGKVE…EYIKAAVGKW (256 aa). N-linked (GlcNAc...) asparagine glycosylation is found at Asn-661, Asn-759, and Asn-799. The helical transmembrane segment at 893 to 913 threads the bilayer; sequence GFIALPLYAILVVGTTFCSLF. An ABC transmembrane type-1 2 domain is found at 897-1175; sequence LPLYAILVVG…ILRAMTQTEN (279 aa). The Cytoplasmic portion of the chain corresponds to 914 to 940; that stretch reads SSVWLSYWTENKFKNRPPSFYMGLYSF. The helical transmembrane segment at 941-961 threads the bilayer; sequence FVFAAFIFMNGQFTILCAMGI. At 962–1027 the chain is on the extracellular side; the sequence is MASKWLNLRA…ANIVGVCVMC (66 aa). The chain crosses the membrane as a helical span at residues 1028–1048; it reads IVYLPWFAIAIPFLLVIFVLI. At 1049–1117 the chain is on the cytoplasmic side; the sequence is ADHYQSSGRE…GYLVVVLQRW (69 aa). The chain crosses the membrane as a helical span at residues 1118 to 1138; sequence VGIFLDMVAIAFALIITLLCV. Over 1139–1141 the chain is Extracellular; sequence TRA. A helical membrane pass occupies residues 1142-1162; sequence FPISAASVGVLLTYVLQLPGL. At 1163–1477 the chain is on the cytoplasmic side; sequence LNTILRAMTQ…IVENDFENRS (315 aa). In terms of domain architecture, ABC transporter 2 spans 1213–1464; the sequence is IIFENVDFAY…EDSIFRSMCS (252 aa). 1247 to 1254 is an ATP binding site; it reads GRTGAGKS.

It belongs to the ABC transporter superfamily. ABCC family. Conjugate transporter (TC 3.A.1.208) subfamily.

It is found in the cell membrane. It catalyses the reaction a 1,2-diacyl-sn-glycero-3-phosphoethanolamine(in) + ATP + H2O = a 1,2-diacyl-sn-glycero-3-phosphoethanolamine(out) + ADP + phosphate + H(+). The enzyme catalyses Cd(2+)(in) + ATP + H2O = Cd(2+)(out) + ADP + phosphate + H(+). The catalysed reaction is an S-substituted glutathione(in) + ATP + H2O = an S-substituted glutathione(out) + ADP + phosphate + H(+). In terms of biological role, functions as a pleiotropic drug pump at the plasma membrane to clear toxic substances from the cytosol. Organic anion transporter involved in the detoxification of a wide range of toxic environmental organic anions that contain carboxyl groups. Required for tolerance to reveromycin A, tautomycin and leptomycin B. Required for oligomycin resistance. Required for rhodamine B resistance. Mediates the ATP-dependent efflux of rhodamine B. Involved in cadmium detoxification. Displays an energy-dependent efflux of cadmium and glutathione, suggesting that YOR1 transports both compounds as a bis-glutathionato-cadmium Cd-(GS)(2) complex. Confers resistance to rhodamine 6G and to doxorubicin. This is Oligomycin resistance ATP-dependent permease YOR1 from Saccharomyces cerevisiae (strain ATCC 204508 / S288c) (Baker's yeast).